The sequence spans 288 residues: Nucleotide-binding protein Tola_2941 (288 aa).

8 to 15 contributes to the ATP binding site; the sequence is GRSGSGKT. 56-59 lines the GTP pocket; sequence DVRN.

It belongs to the RapZ-like family.

Its function is as follows. Displays ATPase and GTPase activities. The polypeptide is Nucleotide-binding protein Tola_2941 (Tolumonas auensis (strain DSM 9187 / NBRC 110442 / TA 4)).